Reading from the N-terminus, the 788-residue chain is Endonuclease MutS2 (788 aa).

ATP is bound at residue 334–341 (GPNTGGKT). The region spanning 713–788 (LDLRGQRYEE…GTGATIVYLQ (76 aa)) is the Smr domain.

The protein belongs to the DNA mismatch repair MutS family. MutS2 subfamily. In terms of assembly, homodimer. Binds to stalled ribosomes, contacting rRNA.

In terms of biological role, endonuclease that is involved in the suppression of homologous recombination and thus may have a key role in the control of bacterial genetic diversity. Functionally, acts as a ribosome collision sensor, splitting the ribosome into its 2 subunits. Detects stalled/collided 70S ribosomes which it binds and splits by an ATP-hydrolysis driven conformational change. Acts upstream of the ribosome quality control system (RQC), a ribosome-associated complex that mediates the extraction of incompletely synthesized nascent chains from stalled ribosomes and their subsequent degradation. Probably generates substrates for RQC. In Lactobacillus johnsonii (strain CNCM I-12250 / La1 / NCC 533), this protein is Endonuclease MutS2.